Reading from the N-terminus, the 269-residue chain is Chromosome-partitioning protein Spo0J (269 aa).

The stimulates ATPase activity of Soj by 8% stretch occupies residues 1-20 (MSRKPSGLGRGLEALLPKTG). Residues 137–156 (QEEVARRVGKARSTVANALR) constitute a DNA-binding region (H-T-H motif). The interval 223–269 (PSPLSLELSRHLGLPVRVVGGKKGKVVIQYRSLEELEALLRRLGYQA) is required for DNA-binding; may be responsible for dimerization.

Belongs to the ParB family. As to quaternary structure, homodimer, probably via the C-terminal 46 residues. Dimerization of the N-terminal H-T-H region may require DNA-binding. Probably interacts with ATPase Soj.

In terms of biological role, probably involved in chromosome partitioning. Binds to a plasmid centromere-like site parS. Stimulates the ATPase activity 10-fold of Soj; the first 20 residues may be responsible. This Thermus thermophilus (strain ATCC BAA-163 / DSM 7039 / HB27) protein is Chromosome-partitioning protein Spo0J (spo0C).